Reading from the N-terminus, the 195-residue chain is Probable GTP-binding protein EngB (195 aa).

The EngB-type G domain maps to G24–L195. Residues G32–S39, G59–T63, D77–G80, T144–D147, and Y176–A178 each bind GTP. Residues S39 and T61 each coordinate Mg(2+).

This sequence belongs to the TRAFAC class TrmE-Era-EngA-EngB-Septin-like GTPase superfamily. EngB GTPase family. It depends on Mg(2+) as a cofactor.

Functionally, necessary for normal cell division and for the maintenance of normal septation. The protein is Probable GTP-binding protein EngB of Macrococcus caseolyticus (strain JCSC5402) (Macrococcoides caseolyticum).